The chain runs to 289 residues: Early E1A protein (289 aa).

Residues 41–49 are interaction with RB1 in competition with E2F1; that stretch reads PTLHELYDL. Positions 76–140 are interaction with UBE2I; sequence EGIDLLTFPP…PSDDEDEEGE (65 aa). The segment at 82-107 is disordered; the sequence is TFPPAPGSPEPPHLSRQPEQPEQRAL. Over residues 84 to 93 the composition is skewed to pro residues; that stretch reads PPAPGSPEPP. The residue at position 89 (S89) is a Phosphoserine; by host. A PXLXP motif, interaction with host ZMYND11 motif is present at residues 113 to 117; the sequence is PNLVP. An LXCXE motif, interaction with host RB1 and TMEM173/STING motif is present at residues 122-126; sequence LTCHE. A zinc finger lies at 154–174; the sequence is CRSCHYHRRNTGDPDIMCSLC. The tract at residues 187 to 245 is disordered; it reads VSEPEPEPEPEPEPARPTRRPKLVPAILRRPTSPVSRECNSSTDSCDSGPSNTPPEIHP. 2 positions are modified to phosphoserine; by host: S219 and S231. The span at 219 to 237 shows a compositional bias: polar residues; the sequence is SPVSRECNSSTDSCDSGPS. Positions 258-289 match the Bipartite nuclear localization signal motif; the sequence is RVGGRRQAVECIEDLLNESGQPLDLSCKRPRP. The PXDLS motif, CTBP-binding motif lies at 279 to 283; that stretch reads PLDLS.

Belongs to the adenoviridae E1A protein family. As to quaternary structure, interacts with host UBE2I; this interaction interferes with polySUMOylation. Interacts with host RB1; this interaction induces the aberrant dissociation of RB1-E2F1 complex thereby disrupting the activity of RB1 and activating E2F1-regulated genes. Interacts with host ATF7; the interaction enhances ATF7-mediated viral transactivation activity which requires the zinc binding domains of both proteins. Isoform early E1A 32 kDa protein and isoform early E1A 26 kDa protein interact (via N-terminus) with CUL1 and E3 ubiquitin ligase RBX1; these interactions inhibit RBX1-CUL1-dependent elongation reaction of ubiquitin chains and attenuate ubiquitination of SCF(FBXW7) target proteins. Interacts (via PXLXP motif) with host ZMYND11/BS69 (via MYND-type zinc finger); this interaction inhibits E1A mediated transactivation. Interacts with host EP300; this interaction stimulates the acetylation of RB1 by recruiting EP300 and RB1 into a multimeric-protein complex. Interacts with host CTBP1 and CTBP2; this interaction seems to potentiate viral replication. Interacts with host DCAF7. Interacts with host DYRK1A. Interacts with host KPNA4; this interaction allows E1A import into the host nucleus. Interacts with host EP400; this interaction stabilizes MYC. Interacts (via LXCXE motif) with host TMEM173/STING; this interaction impairs the ability of TMEM173/STING to sense cytosolic DNA and promote the production of type I interferon (IFN-alpha and IFN-beta). Interacts (via C-terminus) with host ZBED1/hDREF (via C-terminus); the interaction is direct.

It is found in the host nucleus. Plays a role in viral genome replication by driving entry of quiescent cells into the cell cycle. Stimulation of progression from G1 to S phase allows the virus to efficiently use the cellular DNA replicating machinery to achieve viral genome replication. E1A protein has both transforming and trans-activating activities. Induces the disassembly of the E2F1 transcription factor from RB1 by direct competition for the same binding site on RB1, with subsequent transcriptional activation of E2F1-regulated S-phase genes and of the E2 region of the adenoviral genome. Release of E2F1 leads to the ARF-mediated inhibition of MDM2 and causes TP53/p53 to accumulate because it is not targeted for degradation by MDM2-mediated ubiquitination anymore. This increase in TP53, in turn, would arrest the cell proliferation and direct its death but this effect is counteracted by the viral protein E1B-55K. Inactivation of the ability of RB1 to arrest the cell cycle is critical for cellular transformation, uncontrolled cellular growth and proliferation induced by viral infection. Interaction with RBX1 and CUL1 inhibits ubiquitination of the proteins targeted by SCF(FBXW7) ubiquitin ligase complex, and may be linked to unregulated host cell proliferation. The tumorigenesis-restraining activity of E1A may be related to the disruption of the host CtBP-CtIP complex through the CtBP binding motif. Interacts with host TBP protein; this interaction probably disrupts the TBP-TATA complex. Interaction with host TMEM173/STING impairs the ability of TMEM173/STING to sense cytosolic DNA and promote the production of type I interferon (IFN-alpha and IFN-beta). Promotes the sumoylation of host ZBED1/hDREF with SUMO1. This is Early E1A protein from Homo sapiens (Human).